A 642-amino-acid chain; its full sequence is uncharacterized protein (642 aa).

Glu-15 and Asp-118 together coordinate Mg(2+). Positions 29–149 (VCVDTCVVID…YNLAKAQGIE (121 aa)) constitute a PINc domain. In terms of domain architecture, KH spans 510 to 578 (DNSIDLIVPE…ELESTRIYET (69 aa)).

In the N-terminal section; belongs to the PINc/VapC protein family. It depends on Mg(2+) as a cofactor.

This is an uncharacterized protein from Methanocaldococcus jannaschii (strain ATCC 43067 / DSM 2661 / JAL-1 / JCM 10045 / NBRC 100440) (Methanococcus jannaschii).